The chain runs to 119 residues: Large ribosomal subunit protein bL17 (119 aa).

This sequence belongs to the bacterial ribosomal protein bL17 family. As to quaternary structure, part of the 50S ribosomal subunit. Contacts protein L32.

This is Large ribosomal subunit protein bL17 from Mycoplasma mycoides subsp. mycoides SC (strain CCUG 32753 / NCTC 10114 / PG1).